The sequence spans 147 residues: Hemoglobin subunit beta (147 aa).

Valine 2 is subject to N-acetylvaline. Positions 3 to 147 (HLTPEEKNAV…VANALAHKYH (145 aa)) constitute a Globin domain. Threonine 13 is subject to Phosphothreonine. Serine 45 is modified (phosphoserine). Lysine 60 is subject to N6-acetyllysine. Histidine 64 contacts heme b. Position 83 is an N6-acetyllysine (lysine 83). Histidine 93 contacts heme b. Cysteine 94 bears the S-nitrosocysteine mark. Lysine 145 bears the N6-acetyllysine mark.

This sequence belongs to the globin family. In terms of assembly, heterotetramer of two alpha chains and two beta chains. Red blood cells.

In terms of biological role, involved in oxygen transport from the lung to the various peripheral tissues. This Papio anubis (Olive baboon) protein is Hemoglobin subunit beta (HBB).